Consider the following 436-residue polypeptide: GTPase Der (436 aa).

EngA-type G domains lie at 4–167 and 176–351; these read PVVA…PKEE and VKFS…DNHS. GTP-binding positions include 10-17, 57-61, 119-122, 182-189, 229-233, and 294-297; these read GRPNVGKS, DTGGI, NKVD, DTAGM, and NKWD. The region spanning 352–436 is the KH-like domain; it reads LRVQSSMLND…PIRVIARKRK (85 aa).

It belongs to the TRAFAC class TrmE-Era-EngA-EngB-Septin-like GTPase superfamily. EngA (Der) GTPase family. In terms of assembly, associates with the 50S ribosomal subunit.

GTPase that plays an essential role in the late steps of ribosome biogenesis. This is GTPase Der from Listeria welshimeri serovar 6b (strain ATCC 35897 / DSM 20650 / CCUG 15529 / CIP 8149 / NCTC 11857 / SLCC 5334 / V8).